The primary structure comprises 357 residues: MSETTDKQLTEAEKRKLLRERRLAKMAQGKASDRLNTILSQGSSVKSVSPPAVTSVLENKATKSTDTATVTDSSTNATSVSPSAAKATPTSTGVSSAISDFDDPEIQDISDVAVNNSGVLALGNLSGLDSNNPSQPNLDEMFQKIMQQQSQHNCDNDNNGENNPMAEMLKMFNSMGGGDNNGGLGGFDSMFSGSPNSPPPESISPEMMKYQADLAKYHTYQEQLWQFRFLVVRILATIFNFAYHFITIPSFTASNHAYVRDLSEVYPLLGFMTIFTSIEVVIIATYYLLFTKLGLFHASNQKSFILKGISTLSMFVPQLLRYEPLVATFLGYKELLGIFVGDLSLVVVMFGLLSFSN.

Topologically, residues 1 to 224 (MSETTDKQLT…AKYHTYQEQL (224 aa)) are cytoplasmic. Residues 65 to 81 (TDTATVTDSSTNATSVS) are compositionally biased toward low complexity. The interval 65 to 99 (TDTATVTDSSTNATSVSPSAAKATPTSTGVSSAIS) is disordered. A compositionally biased stretch (polar residues) spans 88–98 (TPTSTGVSSAI). The helical transmembrane segment at 225–245 (WQFRFLVVRILATIFNFAYHF) threads the bilayer. The Lumenal portion of the chain corresponds to 246–270 (ITIPSFTASNHAYVRDLSEVYPLLG). A helical transmembrane segment spans residues 271 to 290 (FMTIFTSIEVVIIATYYLLF). Over 291 to 334 (TKLGLFHASNQKSFILKGISTLSMFVPQLLRYEPLVATFLGYKE) the chain is Cytoplasmic. A helical transmembrane segment spans residues 335-355 (LLGIFVGDLSLVVVMFGLLSF). Over 356-357 (SN) the chain is Lumenal.

Belongs to the GET2 family. Component of the Golgi to ER traffic (GET) complex, which is composed of GET1, GET2 and GET3. Within the complex, GET1 and GET2 form a heterotetramer which is stabilized by phosphatidylinositol binding and which binds to the GET3 homodimer.

It is found in the endoplasmic reticulum membrane. The protein localises to the golgi apparatus membrane. Required for the post-translational delivery of tail-anchored (TA) proteins to the endoplasmic reticulum. Together with GET1, acts as a membrane receptor for soluble GET3, which recognizes and selectively binds the transmembrane domain of TA proteins in the cytosol. The GET complex cooperates with the HDEL receptor ERD2 to mediate the ATP-dependent retrieval of resident ER proteins that contain a C-terminal H-D-E-L retention signal from the Golgi to the ER. This is Golgi to ER traffic protein 2 from Lodderomyces elongisporus (strain ATCC 11503 / CBS 2605 / JCM 1781 / NBRC 1676 / NRRL YB-4239) (Yeast).